The chain runs to 294 residues: Cyclin-G1 (294 aa).

The protein belongs to the cyclin family. Cyclin G subfamily.

The protein localises to the nucleus. Functionally, may play a role in growth regulation. Is associated with G2/M phase arrest in response to DNA damage. May be an intermediate by which p53 mediates its role as an inhibitor of cellular proliferation. The sequence is that of Cyclin-G1 (Ccng1) from Rattus norvegicus (Rat).